The primary structure comprises 114 residues: Nucleoid-associated protein slr1847 (114 aa).

This sequence belongs to the YbaB/EbfC family. As to quaternary structure, homodimer.

It localises to the cytoplasm. The protein resides in the nucleoid. Functionally, binds to DNA and alters its conformation. May be involved in regulation of gene expression, nucleoid organization and DNA protection. The protein is Nucleoid-associated protein slr1847 of Synechocystis sp. (strain ATCC 27184 / PCC 6803 / Kazusa).